The chain runs to 211 residues: Protein DEHYDRATION-INDUCED 19 homolog 7 (211 aa).

Thr-113 is subject to Phosphothreonine. The tract at residues 163-194 (GDSVAQVSPKDTSKSKIQQESFSNEDQEKAKK) is disordered. A compositionally biased stretch (polar residues) spans 167–186 (AQVSPKDTSKSKIQQESFSN).

This sequence belongs to the Di19 family. Not phosphorylated in vitro by CPK3 or CPK11. In terms of tissue distribution, expressed in seedlings, roots, leaves, stems, flowers and siliques.

Its subcellular location is the nucleus. Its function is as follows. Involved in both red and blue light signaling. This Arabidopsis thaliana (Mouse-ear cress) protein is Protein DEHYDRATION-INDUCED 19 homolog 7 (DI19-7).